The sequence spans 251 residues: 2,3-bisphosphoglycerate-dependent phosphoglycerate mutase 2 (251 aa).

Substrate is bound by residues Arg8–Asn15, Thr21–Gly22, Arg60, Glu87–Tyr90, Lys98, Arg114–Arg115, and Gly183–Asn184. His9 serves as the catalytic Tele-phosphohistidine intermediate. The active-site Proton donor/acceptor is Glu87.

It belongs to the phosphoglycerate mutase family. BPG-dependent PGAM subfamily. As to quaternary structure, homodimer.

It catalyses the reaction (2R)-2-phosphoglycerate = (2R)-3-phosphoglycerate. Its pathway is carbohydrate degradation; glycolysis; pyruvate from D-glyceraldehyde 3-phosphate: step 3/5. Catalyzes the interconversion of 2-phosphoglycerate and 3-phosphoglycerate. This Nitrosospira multiformis (strain ATCC 25196 / NCIMB 11849 / C 71) protein is 2,3-bisphosphoglycerate-dependent phosphoglycerate mutase 2.